The sequence spans 814 residues: Acyl-coenzyme A dehydrogenase (814 aa).

Glu497 serves as the catalytic Proton acceptor.

It belongs to the acyl-CoA dehydrogenase family. It depends on FAD as a cofactor.

It carries out the reaction a medium-chain 2,3-saturated fatty acyl-CoA + oxidized [electron-transfer flavoprotein] + H(+) = a medium-chain (2E)-enoyl-CoA + reduced [electron-transfer flavoprotein]. The catalysed reaction is a long-chain 2,3-saturated fatty acyl-CoA + oxidized [electron-transfer flavoprotein] + H(+) = a long-chain (2E)-enoyl-CoA + reduced [electron-transfer flavoprotein]. It participates in lipid metabolism; fatty acid beta-oxidation. Functionally, catalyzes the dehydrogenation of acyl-coenzymes A (acyl-CoAs) to 2-enoyl-CoAs, the first step of the beta-oxidation cycle of fatty acid degradation. Is required for the utilization of medium- and long-chain fatty acids as sole carbon sources for growth. The protein is Acyl-coenzyme A dehydrogenase (fadE) of Escherichia coli O157:H7.